Here is a 911-residue protein sequence, read N- to C-terminus: DNA ligase 4 (911 aa).

Glu271, Thr272, Lys273, Leu274, Arg278, Glu331, Lys345, Phe367, Glu427, Lys432, Lys449, and Lys451 together coordinate ATP. Residue Lys273 is the N6-AMP-lysine intermediate of the active site. Glu331 is a binding site for Mg(2+). Residue Glu427 participates in Mg(2+) binding. Positions Leu610–Asp620 are required for catalytic activity. BRCT domains follow at residues Lys654–Met743 and Ser808–Ile911.

It belongs to the ATP-dependent DNA ligase family. In terms of assembly, interacts with XRCC4; the LIG4-XRCC4 subcomplex has a 1:2 stoichiometry and XRCC4 is required for LIG4 stability. Component of the core long-range non-homologous end joining (NHEJ) complex (also named DNA-PK complex) composed of PRKDC, LIG4, XRCC4, XRCC6/Ku70, XRCC5/Ku86 and NHEJ1/XLF. Additional component of the NHEJ complex includes PAXX. Following autophosphorylation, PRKDC dissociates from DNA, leading to formation of the short-range NHEJ complex, composed of LIG4, XRCC4, XRCC6/Ku70, XRCC5/Ku86 and NHEJ1/XLF. Interacts with DCLRE1C; the interaction is direct. Interacts with APLF. The cofactor is Mg(2+). In terms of tissue distribution, testis, thymus, prostate and heart.

It localises to the nucleus. The enzyme catalyses ATP + (deoxyribonucleotide)n-3'-hydroxyl + 5'-phospho-(deoxyribonucleotide)m = (deoxyribonucleotide)n+m + AMP + diphosphate.. Functionally, DNA ligase involved in DNA non-homologous end joining (NHEJ); required for double-strand break (DSB) repair and V(D)J recombination. Catalyzes the NHEJ ligation step of the broken DNA during DSB repair by resealing the DNA breaks after the gap filling is completed. Joins single-strand breaks in a double-stranded polydeoxynucleotide in an ATP-dependent reaction. LIG4 is mechanistically flexible: it can ligate nicks as well as compatible DNA overhangs alone, while in the presence of XRCC4, it can ligate ends with 2-nucleotides (nt) microhomology and 1-nt gaps. Forms a subcomplex with XRCC4; the LIG4-XRCC4 subcomplex is responsible for the NHEJ ligation step and XRCC4 enhances the joining activity of LIG4. Binding of the LIG4-XRCC4 complex to DNA ends is dependent on the assembly of the DNA-dependent protein kinase complex DNA-PK to these DNA ends. LIG4 regulates nuclear localization of XRCC4. The polypeptide is DNA ligase 4 (Homo sapiens (Human)).